Here is a 394-residue protein sequence, read N- to C-terminus: Na(+)/H(+) antiporter NhaA (394 aa).

Transmembrane regions (helical) follow at residues 14-34, 59-79, 95-115, 125-145, 155-175, 177-197, 204-224, 258-278, 292-312, 328-348, and 362-382; these read AGGI…NSVF, LLMW…GMEV, IFPA…YWFI, GWAI…ALLS, FLLA…ALFF, NELS…LITM, GIIH…KSGV, WCAF…SLAG, ITLG…YLAV, VFAI…IAGL, and LSRL…YILL.

Belongs to the NhaA Na(+)/H(+) (TC 2.A.33) antiporter family.

It is found in the cell inner membrane. The catalysed reaction is Na(+)(in) + 2 H(+)(out) = Na(+)(out) + 2 H(+)(in). In terms of biological role, na(+)/H(+) antiporter that extrudes sodium in exchange for external protons. The protein is Na(+)/H(+) antiporter NhaA of Haemophilus ducreyi (strain 35000HP / ATCC 700724).